The sequence spans 341 residues: Anthranilate phosphoribosyltransferase (341 aa).

5-phospho-alpha-D-ribose 1-diphosphate is bound by residues G79, G82–D83, T87, N89–T92, K107–S115, and S119. Residue G79 participates in anthranilate binding. Residue S91 participates in Mg(2+) binding. An anthranilate-binding site is contributed by N110. Position 165 (R165) interacts with anthranilate. Positions 224 and 225 each coordinate Mg(2+).

This sequence belongs to the anthranilate phosphoribosyltransferase family. In terms of assembly, homodimer. Mg(2+) serves as cofactor.

It catalyses the reaction N-(5-phospho-beta-D-ribosyl)anthranilate + diphosphate = 5-phospho-alpha-D-ribose 1-diphosphate + anthranilate. Its pathway is amino-acid biosynthesis; L-tryptophan biosynthesis; L-tryptophan from chorismate: step 2/5. Catalyzes the transfer of the phosphoribosyl group of 5-phosphorylribose-1-pyrophosphate (PRPP) to anthranilate to yield N-(5'-phosphoribosyl)-anthranilate (PRA). In Bacillus cereus (strain ZK / E33L), this protein is Anthranilate phosphoribosyltransferase.